The chain runs to 347 residues: Microneme protein 21 (347 aa).

The protein localises to the cytoplasmic vesicle. The protein resides in the secretory vesicle. Its subcellular location is the microneme. It localises to the secreted. This Toxoplasma gondii protein is Microneme protein 21.